Reading from the N-terminus, the 261-residue chain is Imidazole glycerol phosphate synthase subunit HisF (261 aa).

Active-site residues include aspartate 11 and aspartate 130.

Belongs to the HisA/HisF family. As to quaternary structure, heterodimer of HisH and HisF.

The protein localises to the cytoplasm. The enzyme catalyses 5-[(5-phospho-1-deoxy-D-ribulos-1-ylimino)methylamino]-1-(5-phospho-beta-D-ribosyl)imidazole-4-carboxamide + L-glutamine = D-erythro-1-(imidazol-4-yl)glycerol 3-phosphate + 5-amino-1-(5-phospho-beta-D-ribosyl)imidazole-4-carboxamide + L-glutamate + H(+). The protein operates within amino-acid biosynthesis; L-histidine biosynthesis; L-histidine from 5-phospho-alpha-D-ribose 1-diphosphate: step 5/9. Its function is as follows. IGPS catalyzes the conversion of PRFAR and glutamine to IGP, AICAR and glutamate. The HisF subunit catalyzes the cyclization activity that produces IGP and AICAR from PRFAR using the ammonia provided by the HisH subunit. This is Imidazole glycerol phosphate synthase subunit HisF from Heliobacterium modesticaldum (strain ATCC 51547 / Ice1).